The following is a 192-amino-acid chain: Elongation factor P (192 aa).

K37 carries the post-translational modification N6-(3,6-diaminohexanoyl)-5-hydroxylysine.

The protein belongs to the elongation factor P family. In terms of processing, may be beta-lysylated on the epsilon-amino group of Lys-37 by the combined action of EpmA and EpmB, and then hydroxylated on the C5 position of the same residue by EpmC (if this protein is present). Lysylation is critical for the stimulatory effect of EF-P on peptide-bond formation. The lysylation moiety may extend toward the peptidyltransferase center and stabilize the terminal 3-CCA end of the tRNA. Hydroxylation of the C5 position on Lys-37 may allow additional potential stabilizing hydrogen-bond interactions with the P-tRNA.

The protein resides in the cytoplasm. Its pathway is protein biosynthesis; polypeptide chain elongation. Functionally, involved in peptide bond synthesis. Alleviates ribosome stalling that occurs when 3 or more consecutive Pro residues or the sequence PPG is present in a protein, possibly by augmenting the peptidyl transferase activity of the ribosome. Modification of Lys-37 is required for alleviation. In Acinetobacter baylyi (strain ATCC 33305 / BD413 / ADP1), this protein is Elongation factor P.